Consider the following 220-residue polypeptide: GTP cyclohydrolase 1 (220 aa).

Residues Cys-113, His-116, and Cys-184 each coordinate Zn(2+).

This sequence belongs to the GTP cyclohydrolase I family. Homomer.

It carries out the reaction GTP + H2O = 7,8-dihydroneopterin 3'-triphosphate + formate + H(+). It functions in the pathway cofactor biosynthesis; 7,8-dihydroneopterin triphosphate biosynthesis; 7,8-dihydroneopterin triphosphate from GTP: step 1/1. This chain is GTP cyclohydrolase 1, found in Hamiltonella defensa subsp. Acyrthosiphon pisum (strain 5AT).